We begin with the raw amino-acid sequence, 154 residues long: Bacterial ferritin (154 aa).

The Ferritin-like diiron domain maps to 1–145 (MQGNQAVVDY…QQLRLIELIG (145 aa)). Residues glutamate 18, glutamate 51, histidine 54, glutamate 93, glutamate 127, and histidine 130 each coordinate Fe cation.

The protein belongs to the bacterioferritin family. In terms of assembly, forms a bacterioferritin (BFR) complex with BfrB. Heterooligomer of 24 subunits, arranged as 12 dimers, that are packed together to form an approximately spherical molecule with a central cavity, in which large amounts of iron can be deposited.

It localises to the cytoplasm. It catalyses the reaction 4 Fe(2+) + O2 + 4 H(+) = 4 Fe(3+) + 2 H2O. It carries out the reaction Fe(2+)(in) = Fe(2+)(out). In terms of biological role, iron-storage protein. Its ferroxidase center binds Fe(2+), oxidizes it using dioxygen to Fe(3+), and participates in the subsequent Fe(3+) oxide mineral core formation within the central cavity of the BFR protein shell. Plays a role in protection against iron-mediated oxidative stress. The sequence is that of Bacterial ferritin from Neisseria gonorrhoeae.